A 123-amino-acid polypeptide reads, in one-letter code: Large ribosomal subunit protein bL20 (123 aa).

A compositionally biased stretch (basic residues) spans Met1–Arg15. Positions Met1–Gly23 are disordered.

It belongs to the bacterial ribosomal protein bL20 family.

Binds directly to 23S ribosomal RNA and is necessary for the in vitro assembly process of the 50S ribosomal subunit. It is not involved in the protein synthesizing functions of that subunit. The polypeptide is Large ribosomal subunit protein bL20 (Cutibacterium acnes (strain DSM 16379 / KPA171202) (Propionibacterium acnes)).